The primary structure comprises 413 residues: Peptidase T (413 aa).

H81 contacts Zn(2+). D83 is an active-site residue. D143 is a Zn(2+) binding site. The active-site Proton acceptor is E178. Positions 179, 201, and 383 each coordinate Zn(2+).

It belongs to the peptidase M20B family. The cofactor is Zn(2+).

It localises to the cytoplasm. It catalyses the reaction Release of the N-terminal residue from a tripeptide.. Functionally, cleaves the N-terminal amino acid of tripeptides. The sequence is that of Peptidase T from Lactococcus lactis subsp. hordniae.